The primary structure comprises 543 residues: Putative fatty acyl-CoA reductase CG8303 (543 aa).

Residues 1–29 (MAVITEHGGTTSSPPENNNSIGNGKHRVN) form a disordered region. The span at 8–22 (GGTTSSPPENNNSIG) shows a compositional bias: polar residues. 3 helical membrane-spanning segments follow: residues 386–406 (LFFY…EKLF), 500–520 (VFNV…YFAL), and 522–542 (LTLG…FLVW).

It belongs to the fatty acyl-CoA reductase family.

The protein localises to the membrane. It carries out the reaction a long-chain fatty acyl-CoA + 2 NADPH + 2 H(+) = a long-chain primary fatty alcohol + 2 NADP(+) + CoA. The catalysed reaction is hexadecanoyl-CoA + 2 NADPH + 2 H(+) = hexadecan-1-ol + 2 NADP(+) + CoA. The enzyme catalyses octadecanoyl-CoA + 2 NADPH + 2 H(+) = octadecan-1-ol + 2 NADP(+) + CoA. In terms of biological role, catalyzes the reduction of C16 or C18 fatty acyl-CoA to fatty alcohols. In Drosophila melanogaster (Fruit fly), this protein is Putative fatty acyl-CoA reductase CG8303.